Consider the following 157-residue polypeptide: 2-C-methyl-D-erythritol 2,4-cyclodiphosphate synthase (157 aa).

2 residues coordinate a divalent metal cation: Asp-9 and His-11. Residues 9-11 (DVH) and 35-36 (HS) contribute to the 4-CDP-2-C-methyl-D-erythritol 2-phosphate site. His-43 contributes to the a divalent metal cation binding site. 4-CDP-2-C-methyl-D-erythritol 2-phosphate contacts are provided by residues 57–59 (DIG), 62–66 (FPDTD), 101–107 (AQKPKMA), 133–136 (TTTE), Phe-140, and Arg-143.

This sequence belongs to the IspF family. Homotrimer. Requires a divalent metal cation as cofactor.

It carries out the reaction 4-CDP-2-C-methyl-D-erythritol 2-phosphate = 2-C-methyl-D-erythritol 2,4-cyclic diphosphate + CMP. It functions in the pathway isoprenoid biosynthesis; isopentenyl diphosphate biosynthesis via DXP pathway; isopentenyl diphosphate from 1-deoxy-D-xylulose 5-phosphate: step 4/6. Functionally, involved in the biosynthesis of isopentenyl diphosphate (IPP) and dimethylallyl diphosphate (DMAPP), two major building blocks of isoprenoid compounds. Catalyzes the conversion of 4-diphosphocytidyl-2-C-methyl-D-erythritol 2-phosphate (CDP-ME2P) to 2-C-methyl-D-erythritol 2,4-cyclodiphosphate (ME-CPP) with a corresponding release of cytidine 5-monophosphate (CMP). The polypeptide is 2-C-methyl-D-erythritol 2,4-cyclodiphosphate synthase (Halalkalibacterium halodurans (strain ATCC BAA-125 / DSM 18197 / FERM 7344 / JCM 9153 / C-125) (Bacillus halodurans)).